Reading from the N-terminus, the 791-residue chain is Genome polyprotein (791 aa).

Positions 1–15 (MNNQRKKTGRPSFNM) are interaction with host EXOC1. The Cytoplasmic portion of the chain corresponds to 1–101 (MNNQRKKTGR…LNIMNRRKRS (101 aa)). Residues 37 to 72 (LLSGQGPMKLVMAFIAFLRFLAIPPTAGILARWSSF) form a hydrophobic; homodimerization of capsid protein C region. The propeptide at 101-114 (SVTMLLMLLPTALA) is ER anchor for the capsid protein C, removed in mature form by serine protease NS3. Residues 102 to 119 (VTMLLMLLPTALAFHLTT) traverse the membrane as a helical segment. Topologically, residues 120–242 (RGGEPTLIVS…QIQKVETWAL (123 aa)) are extracellular. Asparagine 183 is a glycosylation site (N-linked (GlcNAc...) asparagine; by host). The chain crosses the membrane as a helical span at residues 243–260 (RHPGFTVIGLFLAHAIGT). Position 261 (serine 261) is a topological domain, cytoplasmic. Residues 262-280 (ITQKGIIFILLMLVTPSMA) traverse the membrane as a helical segment. Over 281–725 (MRCVGIGNRD…IHQIFGTAYG (445 aa)) the chain is Extracellular. Disulfide bonds link cysteine 283–cysteine 310, cysteine 340–cysteine 401, cysteine 354–cysteine 385, and cysteine 372–cysteine 396. Asparagine 347 carries an N-linked (GlcNAc...) asparagine; by host glycan. The fusion peptide stretch occupies residues 378–391 (DRGWGNGCGLFGKG). N-linked (GlcNAc...) asparagine; by host glycosylation is present at asparagine 433. Cystine bridges form between cysteine 465–cysteine 565 and cysteine 582–cysteine 613. The chain crosses the membrane as a helical span at residues 726-746 (ILFSGVSWTMKIGIGILLTWL). At 747–752 (GLNSRS) the chain is on the cytoplasmic side. Residues 753–775 (TSLSMTCIAVGMVTLYLGVMVQA) traverse the membrane as a helical segment. Residues 776 to 791 (DSGCVINWKGKELKCG) lie on the Extracellular side of the membrane. Cysteine 779 and cysteine 790 form a disulfide bridge.

As to quaternary structure, homodimer. Interacts (via N-terminus) with host EXOC1 (via C-terminus); this interaction results in EXOC1 degradation through the proteasome degradation pathway. In terms of assembly, forms heterodimers with envelope protein E in the endoplasmic reticulum and Golgi. Homodimer; in the endoplasmic reticulum and Golgi. Interacts with protein prM. Interacts with non-structural protein 1. As to quaternary structure, homodimer; Homohexamer when secreted. Interacts with envelope protein E. Post-translationally, specific enzymatic cleavages in vivo yield mature proteins. Cleavages in the lumen of endoplasmic reticulum are performed by host signal peptidase, wereas cleavages in the cytoplasmic side are performed by serine protease NS3. Signal cleavage at the 2K-4B site requires a prior NS3 protease-mediated cleavage at the 4A-2K site. In terms of processing, N-glycosylated. N-glycosylated. The excreted form is glycosylated and this is required for efficient secretion of the protein from infected cells.

The protein resides in the virion. It localises to the host nucleus. It is found in the host cytoplasm. Its subcellular location is the host perinuclear region. The protein localises to the secreted. The protein resides in the virion membrane. It localises to the host endoplasmic reticulum membrane. In terms of biological role, plays a role in virus budding by binding to the cell membrane and gathering the viral RNA into a nucleocapsid that forms the core of a mature virus particle. During virus entry, may induce genome penetration into the host cytoplasm after hemifusion induced by the surface proteins. Can migrate to the cell nucleus where it modulates host functions. Overcomes the anti-viral effects of host EXOC1 by sequestering and degrading the latter through the proteasome degradation pathway. Functionally, inhibits RNA silencing by interfering with host Dicer. Prevents premature fusion activity of envelope proteins in trans-Golgi by binding to envelope protein E at pH6.0. After virion release in extracellular space, gets dissociated from E dimers. Its function is as follows. Acts as a chaperone for envelope protein E during intracellular virion assembly by masking and inactivating envelope protein E fusion peptide. prM is the only viral peptide matured by host furin in the trans-Golgi network probably to avoid catastrophic activation of the viral fusion activity in acidic GolGi compartment prior to virion release. prM-E cleavage is inefficient, and many virions are only partially matured. These uncleaved prM would play a role in immune evasion. In terms of biological role, may play a role in virus budding. Exerts cytotoxic effects by activating a mitochondrial apoptotic pathway through M ectodomain. May display a viroporin activity. Functionally, binds to host cell surface receptor and mediates fusion between viral and cellular membranes. Envelope protein is synthesized in the endoplasmic reticulum in the form of heterodimer with protein prM. They play a role in virion budding in the ER, and the newly formed immature particle is covered with 60 spikes composed of heterodimer between precursor prM and envelope protein E. The virion is transported to the Golgi apparatus where the low pH causes dissociation of PrM-E heterodimers and formation of E homodimers. prM-E cleavage is inefficient, and many virions are only partially matured. These uncleaved prM would play a role in immune evasion. Involved in immune evasion, pathogenesis and viral replication. Once cleaved off the polyprotein, is targeted to three destinations: the viral replication cycle, the plasma membrane and the extracellular compartment. Essential for viral replication. Required for formation of the replication complex and recruitment of other non-structural proteins to the ER-derived membrane structures. Excreted as a hexameric lipoparticle that plays a role against host immune response. Antagonizing the complement function. Binds to the host macrophages and dendritic cells. Inhibits signal transduction originating from Toll-like receptor 3 (TLR3). Its function is as follows. Disrupts the host endothelial glycocalyx layer of host pulmonary microvascular endothelial cells, inducing degradation of sialic acid and shedding of heparan sulfate proteoglycans. NS1 induces expression of sialidases, heparanase, and activates cathepsin L, which activates heparanase via enzymatic cleavage. These effects are probably linked to the endothelial hyperpermeability observed in severe dengue disease. This Dengue virus type 1 (strain Jamaica/CV1636/1977) (DENV-1) protein is Genome polyprotein.